The sequence spans 514 residues: Putative binding protein HI_0213 (514 aa).

The N-terminal stretch at 1–23 is a signal peptide; sequence MNNLFALCQRSAVIFSIIFTVVA. Cys-24 carries N-palmitoyl cysteine lipidation. Cys-24 is lipidated: S-diacylglycerol cysteine.

This sequence belongs to the bacterial solute-binding protein 5 family.

It localises to the cell membrane. Functionally, part of a binding-protein-dependent transport system. The protein is Putative binding protein HI_0213 of Haemophilus influenzae (strain ATCC 51907 / DSM 11121 / KW20 / Rd).